Here is a 131-residue protein sequence, read N- to C-terminus: Fumarate reductase subunit C (131 aa).

The next 3 helical transmembrane spans lie at 30-50 (EGTAVPAVWFSIELIFGLFAL), 57-77 (WMGFVGFLQNPVVVILNLITL), and 109-129 (IIKGLWVVTAVVTVVILYVAL).

The protein belongs to the FrdC family. As to quaternary structure, part of an enzyme complex containing four subunits: a flavoprotein (FrdA), an iron-sulfur protein (FrdB), and two hydrophobic anchor proteins (FrdC and FrdD).

The protein resides in the cell inner membrane. Its function is as follows. Two distinct, membrane-bound, FAD-containing enzymes are responsible for the catalysis of fumarate and succinate interconversion; fumarate reductase is used in anaerobic growth, and succinate dehydrogenase is used in aerobic growth. Anchors the catalytic components of the fumarate reductase complex to the cell inner membrane, binds quinones. In Salmonella choleraesuis (strain SC-B67), this protein is Fumarate reductase subunit C.